The sequence spans 621 residues: UvrABC system protein C (621 aa).

In terms of domain architecture, GIY-YIG spans 20 to 106 (TQSGIYQFFD…IKSLKPKYNI (87 aa)). Residues 212-247 (KALLKILESKMHTLSHNLQFEEAAIMRDRIQKITQM) form the UVR domain.

Belongs to the UvrC family. In terms of assembly, interacts with UvrB in an incision complex.

It localises to the cytoplasm. In terms of biological role, the UvrABC repair system catalyzes the recognition and processing of DNA lesions. UvrC both incises the 5' and 3' sides of the lesion. The N-terminal half is responsible for the 3' incision and the C-terminal half is responsible for the 5' incision. In Helicobacter hepaticus (strain ATCC 51449 / 3B1), this protein is UvrABC system protein C.